We begin with the raw amino-acid sequence, 650 residues long: Protein KINESIN LIGHT CHAIN-RELATED 3 (650 aa).

Residues 104-141 (EKQTGKKNVTKSNVGVGGMRKKKVGGTKLQNGNEEPSS) form a disordered region. Residues 131–141 (KLQNGNEEPSS) show a composition bias toward polar residues. 10 TPR repeats span residues 192 to 225 (IMCL…PVVE), 235 to 268 (FAGL…QKKV), 277 to 310 (GETC…HRES), 319 to 353 (AADR…AANG), 359 to 392 (AFVD…LKTA), 401 to 434 (GSVY…YESH), 444 to 477 (ASGL…YADS), 485 to 518 (AGIE…LRAT), 527 to 560 (GIAL…LEQE), and 569 to 602 (LGLY…REEK).

It belongs to the kinesin light chain family.

The chain is Protein KINESIN LIGHT CHAIN-RELATED 3 from Arabidopsis thaliana (Mouse-ear cress).